We begin with the raw amino-acid sequence, 91 residues long: Small ribosomal subunit protein bS18 (91 aa).

This sequence belongs to the bacterial ribosomal protein bS18 family. As to quaternary structure, part of the 30S ribosomal subunit. Forms a tight heterodimer with protein bS6.

Its function is as follows. Binds as a heterodimer with protein bS6 to the central domain of the 16S rRNA, where it helps stabilize the platform of the 30S subunit. In Paraburkholderia phymatum (strain DSM 17167 / CIP 108236 / LMG 21445 / STM815) (Burkholderia phymatum), this protein is Small ribosomal subunit protein bS18.